A 388-amino-acid chain; its full sequence is MRPATRIFIKQRFTDYYDKARISPPSSVKEREFGFIFFDDRYPDDIRMRRHIGFSSGDEMQEYVKSLVPAHAYYSTAYYRTPQAPTMGDKEWLGADLIFDLDADHIMRGSYEAMLERIKGEAEKLLDVLDNELGIDMRTIKLVFSGGRGYHVHVQELAFRDFEPAERRELVDYVCGTGISPSLLLHDWKPGRRGWHDRFRLVLTRYLQDLSTRPIKEVKAELSSLRGVGQVMAERFAGMIPELITLLNTNPSSILLRDQTVRTVFGALTSERESTLLPHIREAAVQADEPVTTDTRRLIRLPGSLHAKSGFKVVPMEVKELHDFDPLIDAVAFGEREVIIESEREYSFSLLGSSYDIPKGRLKVPEAVGVFLCCRGMAEIGGVLDHAS.

Catalysis depends on residues D100, D102, and D288.

Belongs to the eukaryotic-type primase small subunit family. As to quaternary structure, heterodimer of a small subunit (PriS) and a large subunit (PriL). Mg(2+) serves as cofactor. Mn(2+) is required as a cofactor.

Its function is as follows. Catalytic subunit of DNA primase, an RNA polymerase that catalyzes the synthesis of short RNA molecules used as primers for DNA polymerase during DNA replication. The small subunit contains the primase catalytic core and has DNA synthesis activity on its own. Binding to the large subunit stabilizes and modulates the activity, increasing the rate of DNA synthesis while decreasing the length of the DNA fragments, and conferring RNA synthesis capability. The DNA polymerase activity may enable DNA primase to also catalyze primer extension after primer synthesis. May also play a role in DNA repair. In Methanospirillum hungatei JF-1 (strain ATCC 27890 / DSM 864 / NBRC 100397 / JF-1), this protein is DNA primase small subunit PriS.